Reading from the N-terminus, the 366-residue chain is Holliday junction branch migration complex subunit RuvB (366 aa).

The segment at 1 to 50 is disordered; the sequence is MAIISSKKQPPEPNGEPKQRRESAKAPSTENILKPEAAIDEQEQQEEGIR. The tract at residues 13–210 is large ATPase domain (RuvB-L); the sequence is PNGEPKQRRE…FGLIQKLRFY (198 aa). Over residues 15 to 24 the composition is skewed to basic and acidic residues; sequence GEPKQRRESA. ATP is bound by residues I49, R50, G91, K94, T95, T96, 157–159, R200, Y210, and R247; that span reads EDY. T95 contacts Mg(2+). The small ATPAse domain (RuvB-S) stretch occupies residues 211–281; that stretch reads EVDELTQIVL…IASEALQLFQ (71 aa). Residues 284–366 form a head domain (RuvB-H) region; the sequence is PCGLDWTDRQ…TPPNEQLSLL (83 aa). Positions 339 and 344 each coordinate DNA.

The protein belongs to the RuvB family. As to quaternary structure, homohexamer. Forms an RuvA(8)-RuvB(12)-Holliday junction (HJ) complex. HJ DNA is sandwiched between 2 RuvA tetramers; dsDNA enters through RuvA and exits via RuvB. An RuvB hexamer assembles on each DNA strand where it exits the tetramer. Each RuvB hexamer is contacted by two RuvA subunits (via domain III) on 2 adjacent RuvB subunits; this complex drives branch migration. In the full resolvosome a probable DNA-RuvA(4)-RuvB(12)-RuvC(2) complex forms which resolves the HJ.

Its subcellular location is the cytoplasm. The catalysed reaction is ATP + H2O = ADP + phosphate + H(+). Functionally, the RuvA-RuvB-RuvC complex processes Holliday junction (HJ) DNA during genetic recombination and DNA repair, while the RuvA-RuvB complex plays an important role in the rescue of blocked DNA replication forks via replication fork reversal (RFR). RuvA specifically binds to HJ cruciform DNA, conferring on it an open structure. The RuvB hexamer acts as an ATP-dependent pump, pulling dsDNA into and through the RuvAB complex. RuvB forms 2 homohexamers on either side of HJ DNA bound by 1 or 2 RuvA tetramers; 4 subunits per hexamer contact DNA at a time. Coordinated motions by a converter formed by DNA-disengaged RuvB subunits stimulates ATP hydrolysis and nucleotide exchange. Immobilization of the converter enables RuvB to convert the ATP-contained energy into a lever motion, pulling 2 nucleotides of DNA out of the RuvA tetramer per ATP hydrolyzed, thus driving DNA branch migration. The RuvB motors rotate together with the DNA substrate, which together with the progressing nucleotide cycle form the mechanistic basis for DNA recombination by continuous HJ branch migration. Branch migration allows RuvC to scan DNA until it finds its consensus sequence, where it cleaves and resolves cruciform DNA. In Nostoc punctiforme (strain ATCC 29133 / PCC 73102), this protein is Holliday junction branch migration complex subunit RuvB.